Reading from the N-terminus, the 101-residue chain is Small ribosomal subunit protein uS14c (101 aa).

The protein belongs to the universal ribosomal protein uS14 family. In terms of assembly, part of the 30S ribosomal subunit.

The protein localises to the plastid. In terms of biological role, binds 16S rRNA, required for the assembly of 30S particles. The chain is Small ribosomal subunit protein uS14c from Helicosporidium sp. subsp. Simulium jonesii (Green alga).